A 291-amino-acid chain; its full sequence is Small ribosomal subunit protein uS2 (291 aa).

Residues 235–291 (NLQEDEESGDSGVDPYQDREEEITDYSNYTPKDEASGDDEDEEDNSLVNDEDLYDDK) are disordered. Positions 270–291 (SGDDEDEEDNSLVNDEDLYDDK) are enriched in acidic residues.

It belongs to the universal ribosomal protein uS2 family.

The chain is Small ribosomal subunit protein uS2 from Treponema denticola (strain ATCC 35405 / DSM 14222 / CIP 103919 / JCM 8153 / KCTC 15104).